The chain runs to 239 residues: MGQKVNPTGLRLGINKTWSSRWYAGPRNYADLLLEDLKIRAMIQEIPECKNADIAEVEIIRHPQRITIMIHTARPGVIIGVKGANIENIGAIIQKKLGKKVQIKIKEVKRAELRAALVAQNVARQLAGRASFRKVLKQACFNTMRSGAQGIKIRISGRLGGAEMSRTEEMKEGRVPLHTLRADIDYGFAEADTTYGKIGVKVWLYSGMMFGGEQKEDAGALLKKQRRPRTEKPAQAGRQ.

The KH type-2 domain maps to 39–109; sequence IRAMIQEIPE…KVQIKIKEVK (71 aa). The disordered stretch occupies residues 219 to 239; the sequence is GALLKKQRRPRTEKPAQAGRQ.

It belongs to the universal ribosomal protein uS3 family. In terms of assembly, part of the 30S ribosomal subunit. Forms a tight complex with proteins S10 and S14.

Functionally, binds the lower part of the 30S subunit head. Binds mRNA in the 70S ribosome, positioning it for translation. The chain is Small ribosomal subunit protein uS3 from Treponema denticola (strain ATCC 35405 / DSM 14222 / CIP 103919 / JCM 8153 / KCTC 15104).